Consider the following 114-residue polypeptide: UPF0102 protein jhp_0762 (114 aa).

This sequence belongs to the UPF0102 family.

The protein is UPF0102 protein jhp_0762 of Helicobacter pylori (strain J99 / ATCC 700824) (Campylobacter pylori J99).